A 427-amino-acid chain; its full sequence is Glutamate-1-semialdehyde 2,1-aminomutase (427 aa).

K265 is modified (N6-(pyridoxal phosphate)lysine).

This sequence belongs to the class-III pyridoxal-phosphate-dependent aminotransferase family. HemL subfamily. As to quaternary structure, homodimer. Pyridoxal 5'-phosphate serves as cofactor.

Its subcellular location is the cytoplasm. The catalysed reaction is (S)-4-amino-5-oxopentanoate = 5-aminolevulinate. Its pathway is porphyrin-containing compound metabolism; protoporphyrin-IX biosynthesis; 5-aminolevulinate from L-glutamyl-tRNA(Glu): step 2/2. The polypeptide is Glutamate-1-semialdehyde 2,1-aminomutase (Pseudomonas putida (strain ATCC 47054 / DSM 6125 / CFBP 8728 / NCIMB 11950 / KT2440)).